Here is a 432-residue protein sequence, read N- to C-terminus: MTNVVVVGSQWGDEGKGKIVDWLSERADIVVRYQGGHNAGHTLVIDGTSYKLSLLPSGVVRPGKMAVIGNGVVVDPHALIAEIGRLEAQGVTVTPDNLRIADNATLILSLHRELDAMREDAASNSGTKIGTTRRGIGPAYEDKVGRRAIRVMDLADLDSLAGKVDRILTHHNALRRGLGVAEVSHQTIMDELTSIADRVLPFRDTVWLFLDKERRKGSRILFEGAQGSLLDIDHGTYPFVTSSNTVAGQAAAGSGMGPGSLGYILGITKAYTTRVGEGPFPTELKDAIGEFLGEKGHEFGVVTGRKRRCGWFDAALVRQSIATNGITGIALTKLDVLDGLEELKICVGYMLDGEQIDHLPASQGAQARVEPVYITLEGWKESTVGARSWADLPAQAIKYVRQVEELIGAPVALLSTSPERDDTILVTDPFED.

GTP-binding positions include 12-18 (GDEGKGK) and 40-42 (GHT). Asp13 functions as the Proton acceptor in the catalytic mechanism. Positions 13 and 40 each coordinate Mg(2+). IMP contacts are provided by residues 13–16 (DEGK), 38–41 (NAGH), Thr132, Arg146, Gln226, Thr241, and Arg305. His41 acts as the Proton donor in catalysis. Residue 301 to 307 (VVTGRKR) participates in substrate binding. GTP-binding positions include Arg307, 333 to 335 (KLD), and 415 to 417 (STS).

The protein belongs to the adenylosuccinate synthetase family. In terms of assembly, homodimer. It depends on Mg(2+) as a cofactor.

The protein resides in the cytoplasm. It carries out the reaction IMP + L-aspartate + GTP = N(6)-(1,2-dicarboxyethyl)-AMP + GDP + phosphate + 2 H(+). It participates in purine metabolism; AMP biosynthesis via de novo pathway; AMP from IMP: step 1/2. Functionally, plays an important role in the de novo pathway of purine nucleotide biosynthesis. Catalyzes the first committed step in the biosynthesis of AMP from IMP. This is Adenylosuccinate synthetase from Rhizobium leguminosarum bv. trifolii (strain WSM2304).